The following is a 358-amino-acid chain: NADH-quinone oxidoreductase subunit H (358 aa).

The next 8 helical transmembrane spans lie at Ile-20–Ile-40, Ala-95–Ile-115, Ile-128–Gly-148, Ile-168–Met-188, Val-206–Val-226, Gly-253–Leu-273, Trp-290–Tyr-310, and Val-334–Leu-354.

This sequence belongs to the complex I subunit 1 family. NDH-1 is composed of 14 different subunits. Subunits NuoA, H, J, K, L, M, N constitute the membrane sector of the complex.

It localises to the cell inner membrane. The catalysed reaction is a quinone + NADH + 5 H(+)(in) = a quinol + NAD(+) + 4 H(+)(out). Functionally, NDH-1 shuttles electrons from NADH, via FMN and iron-sulfur (Fe-S) centers, to quinones in the respiratory chain. The immediate electron acceptor for the enzyme in this species is believed to be ubiquinone. Couples the redox reaction to proton translocation (for every two electrons transferred, four hydrogen ions are translocated across the cytoplasmic membrane), and thus conserves the redox energy in a proton gradient. This subunit may bind ubiquinone. This is NADH-quinone oxidoreductase subunit H from Neisseria meningitidis serogroup A / serotype 4A (strain DSM 15465 / Z2491).